The chain runs to 117 residues: DNA-binding protein RdgB (117 aa).

A DNA-binding region (H-T-H motif) is located at residues 82-102 (NHSALAKKYNVSLQWIYKIVR).

Belongs to the c/mor transcriptional regulatory family.

Functionally, regulates pectin lyase production in response to DNA damage. The polypeptide is DNA-binding protein RdgB (rdgB) (Pectobacterium carotovorum subsp. carotovorum (Erwinia carotovora subsp. carotovora)).